We begin with the raw amino-acid sequence, 146 residues long: MAAKKKVVTQIKLQCPAGKATPAPPVGPALGPHGVSAPQFVQQFNDRTKSMEPGLVVPVVVTVYSDKSFSFVLKTPPAAVLIRKACGIEKGSTNSVKQKVARLSLAQLTEIAQVKLPDMSALTLDAAKRIIAGTARSMGVEVERSL.

It belongs to the universal ribosomal protein uL11 family. As to quaternary structure, part of the ribosomal stalk of the 50S ribosomal subunit. Interacts with L10 and the large rRNA to form the base of the stalk. L10 forms an elongated spine to which L12 dimers bind in a sequential fashion forming a multimeric L10(L12)X complex. In terms of processing, one or more lysine residues are methylated.

In terms of biological role, forms part of the ribosomal stalk which helps the ribosome interact with GTP-bound translation factors. The protein is Large ribosomal subunit protein uL11 of Treponema pallidum subsp. pallidum (strain SS14).